We begin with the raw amino-acid sequence, 93 residues long: Molybdopterin synthase sulfur carrier subunit (93 aa).

Gly-93 carries the post-translational modification 1-thioglycine; alternate. Gly-93 carries the post-translational modification Glycyl adenylate; alternate.

It belongs to the MoaD family. MOCS2A subfamily. As to quaternary structure, heterotetramer; composed of 2 small (MOCS2A) and 2 large (MOCS2B) subunits. In terms of processing, C-terminal thiocarboxylation occurs in 2 steps, it is first acyl-adenylated (-COAMP) via the hesA/moeB/thiF part of uba4, then thiocarboxylated (-COSH) via the rhodanese domain of uba4.

It is found in the cytoplasm. The protein operates within cofactor biosynthesis; molybdopterin biosynthesis. Acts as a sulfur carrier required for molybdopterin biosynthesis. Component of the molybdopterin synthase complex that catalyzes the conversion of precursor Z into molybdopterin by mediating the incorporation of 2 sulfur atoms into precursor Z to generate a dithiolene group. In the complex, serves as sulfur donor by being thiocarboxylated (-COSH) at its C-terminus by uba4. After interaction with MOCS2B, the sulfur is then transferred to precursor Z to form molybdopterin. In Pyrenophora tritici-repentis (strain Pt-1C-BFP) (Wheat tan spot fungus), this protein is Molybdopterin synthase sulfur carrier subunit.